Here is a 214-residue protein sequence, read N- to C-terminus: Octanoyltransferase (214 aa).

Positions 36 to 214 (GRESEMVWLL…QQKFDTIFLQ (179 aa)) constitute a BPL/LPL catalytic domain. Residues 75-82 (RGGKYSYH), 147-149 (AFG), and 160-162 (GFS) each bind substrate. The active-site Acyl-thioester intermediate is Cys178.

This sequence belongs to the LipB family.

It localises to the cytoplasm. The catalysed reaction is octanoyl-[ACP] + L-lysyl-[protein] = N(6)-octanoyl-L-lysyl-[protein] + holo-[ACP] + H(+). Its pathway is protein modification; protein lipoylation via endogenous pathway; protein N(6)-(lipoyl)lysine from octanoyl-[acyl-carrier-protein]: step 1/2. Catalyzes the transfer of endogenously produced octanoic acid from octanoyl-acyl-carrier-protein onto the lipoyl domains of lipoate-dependent enzymes. Lipoyl-ACP can also act as a substrate although octanoyl-ACP is likely to be the physiological substrate. This Anaplasma marginale (strain Florida) protein is Octanoyltransferase.